The chain runs to 157 residues: Transcription elongation factor GreA (157 aa).

Residues 13 to 75 adopt a coiled-coil conformation; it reads RARLEAELEE…EIKSILARAQ (63 aa). The segment at 113–142 is disordered; it reads EAKPSEGKISNESPIGSALLGKRPRQKVTV.

It belongs to the GreA/GreB family.

In terms of biological role, necessary for efficient RNA polymerase transcription elongation past template-encoded arresting sites. The arresting sites in DNA have the property of trapping a certain fraction of elongating RNA polymerases that pass through, resulting in locked ternary complexes. Cleavage of the nascent transcript by cleavage factors such as GreA or GreB allows the resumption of elongation from the new 3'terminus. GreA releases sequences of 2 to 3 nucleotides. The chain is Transcription elongation factor GreA from Roseiflexus sp. (strain RS-1).